The chain runs to 448 residues: Trigger factor (448 aa).

Residues 167–253 (GSIVRVDFVE…IKDIKKRDIP (87 aa)) enclose the PPIase FKBP-type domain.

This sequence belongs to the FKBP-type PPIase family. Tig subfamily.

It localises to the cytoplasm. It carries out the reaction [protein]-peptidylproline (omega=180) = [protein]-peptidylproline (omega=0). Involved in protein export. Acts as a chaperone by maintaining the newly synthesized protein in an open conformation. Functions as a peptidyl-prolyl cis-trans isomerase. The chain is Trigger factor from Borrelia hermsii (strain HS1 / DAH).